Consider the following 598-residue polypeptide: DNA ligase (598 aa).

D258 is a binding site for ATP. K260 (N6-AMP-lysine intermediate) is an active-site residue. The ATP site is built by R265, R280, E310, F350, R427, and K433.

It belongs to the ATP-dependent DNA ligase family. Mg(2+) serves as cofactor.

The enzyme catalyses ATP + (deoxyribonucleotide)n-3'-hydroxyl + 5'-phospho-(deoxyribonucleotide)m = (deoxyribonucleotide)n+m + AMP + diphosphate.. Functionally, DNA ligase that seals nicks in double-stranded DNA during DNA replication, DNA recombination and DNA repair. This chain is DNA ligase, found in Sulfolobus acidocaldarius (strain ATCC 33909 / DSM 639 / JCM 8929 / NBRC 15157 / NCIMB 11770).